The following is a 338-amino-acid chain: MSGDKDRRLPFDRDREMITKAEVETDPRYGCPPEERPIEEYIMKGVINLDKPAGPTSHEVVAWVKEIFGLSKAGHGGTLDPKVTGVLPIALEKATKIIQTLLPAGKEYVTIMHLHGDVDEEELERVVKEFEGTILQRPPLRSAVKRRVRPKKIYYIDILEIDGRDVLMRVGCQAGTYIRKLCHDIGEALGVGAHMAELRRTRTGPFSEENAVTLHDVKDAYEFWKEEGWEEPLRHVVRPMEEGLEHLPRIEIRDTAVDAICHGANLAAPGIVRVEKGIQPGDLVAIFTLKGEAVALGVAKATWKEMLHADRGIMVDTKRVLMEPGTYPKAWGLKTPGE.

Asp-80 functions as the Nucleophile in the catalytic mechanism. Residues 247–322 (LPRIEIRDTA…IMVDTKRVLM (76 aa)) enclose the PUA domain.

Belongs to the pseudouridine synthase TruB family. Type 2 subfamily.

The catalysed reaction is uridine(55) in tRNA = pseudouridine(55) in tRNA. In terms of biological role, could be responsible for synthesis of pseudouridine from uracil-55 in the psi GC loop of transfer RNAs. The sequence is that of Probable tRNA pseudouridine synthase B from Methanopyrus kandleri (strain AV19 / DSM 6324 / JCM 9639 / NBRC 100938).